Consider the following 463-residue polypeptide: uncharacterized protein (463 aa).

Residues 1–93 form the PE domain; sequence MSYMIAVPDM…AGAYASAEAT (93 aa). Disordered regions lie at residues 231–320 and 408–463; these read GGAG…AGNG and NGGD…TPGQ. The segment covering 408–451 has biased composition (gly residues); the sequence is NGGDGGKGGDAQLIGNGGNGGNGGKGGTGLMPGINGTGGAGGSR.

The protein belongs to the mycobacterial PE family. PGRS subfamily.

This is an uncharacterized protein from Mycobacterium tuberculosis (strain ATCC 25618 / H37Rv).